A 559-amino-acid chain; its full sequence is Putative protease Do-like 3, mitochondrial (559 aa).

A mitochondrion-targeting transit peptide spans 1-48; the sequence is MSFLCVRTVSRFRSLSRALAPGFLLLHGNAVPKTAVFFRQQSSNTRLF. The interval 59-81 is disordered; the sequence is ENNSKSALKNKLPPGKEVSSKDA. The serine protease stretch occupies residues 100 to 292; sequence VFTVSSKPRL…FLNAIEESGE (193 aa). Catalysis depends on charge relay system residues histidine 138, aspartate 169, and serine 247. The 81-residue stretch at 300 to 380 folds into the PDZ domain; the sequence is NLTYQKMDND…HLVSMKKPCE (81 aa). The segment at 538 to 559 is disordered; the sequence is SEDLQPKQQNKRSKVPPKSKEH. Positions 546-559 are enriched in basic residues; it reads QNKRSKVPPKSKEH.

Belongs to the peptidase S1C family.

The protein localises to the mitochondrion matrix. Functionally, putative serine protease. In Arabidopsis thaliana (Mouse-ear cress), this protein is Putative protease Do-like 3, mitochondrial (DEGP3).